A 282-amino-acid chain; its full sequence is Bis(5'-nucleosyl)-tetraphosphatase, symmetrical (282 aa).

The protein belongs to the Ap4A hydrolase family.

It catalyses the reaction P(1),P(4)-bis(5'-adenosyl) tetraphosphate + H2O = 2 ADP + 2 H(+). Functionally, hydrolyzes diadenosine 5',5'''-P1,P4-tetraphosphate to yield ADP. The protein is Bis(5'-nucleosyl)-tetraphosphatase, symmetrical of Escherichia fergusonii (strain ATCC 35469 / DSM 13698 / CCUG 18766 / IAM 14443 / JCM 21226 / LMG 7866 / NBRC 102419 / NCTC 12128 / CDC 0568-73).